A 485-amino-acid chain; its full sequence is MSTTKTTKMTVKTGSKGTSGRVVRVTGPVVDVEFPHGFVPELFNALNAKTTFSSLAKTLTLEVAQHLGDNLVRTISLQPTDGLVRGVEVTDTGNSISVPVGEGVKGHVFNALGYCLDEPGYGDEFEHWSIHRKPPSFEELEPRTEMLETGLKVVDLLTPYVRGGKIALFGGAGVGKTVLIQEMINRIARNFGGTSVFAGVGERTREGNDLWVELQEVNVLKDTALVFGQMDEPPGTRMRVALSALTMAEWFRDEASQDVLLFIDNIFRFTQAGSEVSTLLGRMPSAVGYQPTLADEMGELQERITSTRGRSITSMQAVYVPADDYTDPAPATTFAHLDATTELSRSVFAKGIFPAVDPLASSSTILDPGIVGEEHYRVAQEVIRILQRYKDLQDIIAILGIDELSEEDKQLVNRARRIERFLSQNMMAAEQFTGQPGSTVPVKETIDAFDRLCKGEFDHVPEQAFFLIGGLDDLTKKAESLGAKL.

Residues 1–20 (MSTTKTTKMTVKTGSKGTSG) form a disordered region. ATP is bound at residue 170-177 (GGAGVGKT).

It belongs to the ATPase alpha/beta chains family. F-type ATPases have 2 components, CF(1) - the catalytic core - and CF(0) - the membrane proton channel. CF(1) has five subunits: alpha(3), beta(3), gamma(1), delta(1), epsilon(1). CF(0) has three main subunits: a(1), b(2) and c(9-12). The alpha and beta chains form an alternating ring which encloses part of the gamma chain. CF(1) is attached to CF(0) by a central stalk formed by the gamma and epsilon chains, while a peripheral stalk is formed by the delta and b chains.

Its subcellular location is the cell membrane. The catalysed reaction is ATP + H2O + 4 H(+)(in) = ADP + phosphate + 5 H(+)(out). Its function is as follows. Produces ATP from ADP in the presence of a proton gradient across the membrane. The catalytic sites are hosted primarily by the beta subunits. In Mycobacterium leprae (strain TN), this protein is ATP synthase subunit beta.